A 448-amino-acid chain; its full sequence is Biotin carboxylase (448 aa).

Residues 1 to 445 (MLEKVVIANR…NIHYLEKKLG (445 aa)) form the Biotin carboxylation domain. Residues lysine 116, lysine 159, 165-166 (GG), 201-204 (EKYL), histidine 209, and histidine 236 contribute to the ATP site. In terms of domain architecture, ATP-grasp spans 120–317 (IKAMKKAGVP…LVKEQLRIAA (198 aa)). Lysine 238 contacts hydrogencarbonate. ATP contacts are provided by glutamate 276 and glutamate 288. Residues glutamate 276, glutamate 288, and asparagine 290 each coordinate Mg(2+). Positions 276, 288, and 290 each coordinate Mn(2+). Hydrogencarbonate is bound by residues arginine 292, valine 295, and arginine 338. Arginine 292 is a catalytic residue. Residue arginine 338 participates in biotin binding.

As to quaternary structure, acetyl-CoA carboxylase is a heterohexamer of biotin carboxyl carrier protein, biotin carboxylase and the two subunits of carboxyl transferase in a 2:2 complex. Requires Mg(2+) as cofactor. Mn(2+) serves as cofactor.

The catalysed reaction is N(6)-biotinyl-L-lysyl-[protein] + hydrogencarbonate + ATP = N(6)-carboxybiotinyl-L-lysyl-[protein] + ADP + phosphate + H(+). It participates in lipid metabolism; malonyl-CoA biosynthesis; malonyl-CoA from acetyl-CoA: step 1/1. In terms of biological role, this protein is a component of the acetyl coenzyme A carboxylase complex; first, biotin carboxylase catalyzes the carboxylation of the carrier protein and then the transcarboxylase transfers the carboxyl group to form malonyl-CoA. This is Biotin carboxylase (accC) from Haemophilus influenzae (strain ATCC 51907 / DSM 11121 / KW20 / Rd).